The sequence spans 276 residues: D-apionate oxidoisomerase (276 aa).

NAD(+)-binding positions include 12–14 (GKM), E33, and D69. Zn(2+)-binding residues include H114 and E184.

This sequence belongs to the ApnO family. Zn(2+) serves as cofactor.

The catalysed reaction is D-apionate + NAD(+) = 3-oxoisoapionate + NADH + H(+). It functions in the pathway carbohydrate metabolism. Functionally, involved in catabolism of D-apiose. Catalyzes the conversion of D-apionate to 3-oxo-isoapionate. This is D-apionate oxidoisomerase from Cupriavidus necator (strain ATCC 43291 / DSM 13513 / CCUG 52238 / LMG 8453 / N-1) (Ralstonia eutropha).